The following is a 369-amino-acid chain: UPF0284 protein sll1500 (369 aa).

The protein belongs to the UPF0284 family.

The sequence is that of UPF0284 protein sll1500 from Synechocystis sp. (strain ATCC 27184 / PCC 6803 / Kazusa).